Consider the following 180-residue polypeptide: MLENRLYKRSDFWKLFSRKYKLTKTIEHMMIDSIDIQENDRILEIGIGNGTVFKSITKKLKKGSLKSIDPSKRKVRQISRANRKNMGNGEVFHGYPEDIPFDDRTFNKVFSLHTVQSCTDIRLALREIYRVLQIDGRFYISIDTNTGEKEKTYIQLLKDQHFRDLSVIRRASCLCIVAVK.

Belongs to the methyltransferase superfamily.

This is Putative methyltransferase YrhH (yrhH) from Bacillus subtilis (strain 168).